A 559-amino-acid chain; its full sequence is Tissue-type plasminogen activator (559 aa).

The signal sequence occupies residues Met1 to Pro17. Residues Leu18–Arg29 constitute a propeptide that is removed on maturation. Positions Gly30–Arg32 are cleaved as a propeptide — removed by plasmin. The Fibronectin type-I domain maps to Ala36–Val78. Disulfide bonds link Cys38–Cys68, Cys66–Cys75, Cys83–Cys94, Cys88–Cys105, Cys107–Cys116, Cys124–Cys205, Cys145–Cys187, Cys176–Cys200, Cys213–Cys294, Cys234–Cys276, Cys265–Cys289, Cys297–Cys428, Cys340–Cys356, Cys348–Cys417, Cys442–Cys516, Cys474–Cys490, and Cys506–Cys534. The important for binding to annexin A2 stretch occupies residues Arg39–Gln49. Residues Pro79–Asp117 form the EGF-like domain. Kringle domains lie at Cys124 to Cys205 and Cys213 to Cys294. Asn149 is a glycosylation site (N-linked (GlcNAc...) asparagine). Positions Ile309–Lys558 constitute a Peptidase S1 domain. Active-site charge relay system residues include His355 and Asp404. Asn481 is a glycosylation site (N-linked (GlcNAc...) asparagine). Ser510 functions as the Charge relay system in the catalytic mechanism.

The protein belongs to the peptidase S1 family. As to quaternary structure, heterodimer of chain A and chain B held by a disulfide bond. Binds to fibrin with high affinity. This interaction leads to an increase in the catalytic efficiency of the enzyme due to an increase in affinity for plasminogen. Similarly, binding to heparin increases the activation of plasminogen. Binds to annexin A2, cytokeratin-8, fibronectin and laminin. Binds to mannose receptor and the low-density lipoprotein receptor-related protein (LRP1); these proteins are involved in TPA clearance. Binds LRP1B; binding is followed by internalization and degradation. Forms heterodimer with SERPINA5. Interacts with SERPINE1. In complex with SERPINE1, interacts with SORL1. In terms of processing, the single chain, almost fully active enzyme, can be further processed into a two-chain fully active form by a cleavage after Arg-308 catalyzed by plasmin, tissue kallikrein or factor Xa.

It localises to the secreted. It is found in the extracellular space. The catalysed reaction is Specific cleavage of Arg-|-Val bond in plasminogen to form plasmin.. Inhibited by SERPINA5. Inhibited by SERPINE1. In terms of biological role, converts the abundant, but inactive, zymogen plasminogen to plasmin by hydrolyzing a single Arg-Val bond in plasminogen. By controlling plasmin-mediated proteolysis, it plays an important role in tissue remodeling and degradation, in cell migration and many other physiopathological events. During oocyte activation, plays a role in cortical granule reaction in the zona reaction, which contributes to the block to polyspermy. The protein is Tissue-type plasminogen activator (Plat) of Mus musculus (Mouse).